The chain runs to 318 residues: Pantothenate kinase (318 aa).

ATP is bound at residue 96 to 103 (GSVAVGKS).

The protein belongs to the prokaryotic pantothenate kinase family.

Its subcellular location is the cytoplasm. The enzyme catalyses (R)-pantothenate + ATP = (R)-4'-phosphopantothenate + ADP + H(+). Its pathway is cofactor biosynthesis; coenzyme A biosynthesis; CoA from (R)-pantothenate: step 1/5. This is Pantothenate kinase from Coxiella burnetii (strain Dugway 5J108-111).